A 507-amino-acid polypeptide reads, in one-letter code: MVNIRPDEISSIIRKQIEQYNQEVKIVNIGTVLQVGDGIARIYGLDKVMAGELVEFEDGTVGIALNLESDNVGAVLMGDGLTIQEGSSVKATGKIAQIPVSDAYLGRVVNALAQPIDGKGQIPASEFRLIESPAPGIISRRSVYEPMQTGLIAIDSMIPIGRGQRELIIGDRQTGKTAVAIDTILNQKGQNVVCVYVAIGQKASSVAQVVNTFEDRGALEYTIVVAETANSPATLQYLAPYTGAALAEYFMYRKQHTLIIYDDLSKQAQAYRQMSLLLRRPPGREAYPGDVFYLHSRLLERAAKLSSNLGEGSMTALPIVETQAGDVSAYIPTNVISITDGQIFLSADLFNAGIRPAINVGISVSRVGSAAQIKAMKQVAGKLKLELAQFAELEAFAQFASDLDKATQNQLARGQRLRELLKQSQSAPLSVEEQIATIYTGVNGYLDVLETGQVKKFLIQLREYLVTNKPQFAEIIRSTKVFTEQAENLLKEAITEHIELFLFQEEK.

170–177 (GDRQTGKT) serves as a coordination point for ATP.

This sequence belongs to the ATPase alpha/beta chains family. In terms of assembly, F-type ATPases have 2 components, CF(1) - the catalytic core - and CF(0) - the membrane proton channel. CF(1) has five subunits: alpha(3), beta(3), gamma(1), delta(1), epsilon(1). CF(0) has four main subunits: a, b, b' and c.

Its subcellular location is the plastid. The protein localises to the chloroplast thylakoid membrane. It carries out the reaction ATP + H2O + 4 H(+)(in) = ADP + phosphate + 5 H(+)(out). Its function is as follows. Produces ATP from ADP in the presence of a proton gradient across the membrane. The alpha chain is a regulatory subunit. The sequence is that of ATP synthase subunit alpha, chloroplastic from Marchantia polymorpha (Common liverwort).